Consider the following 183-residue polypeptide: CASP-like protein UU1 (183 aa).

Topologically, residues 1–33 (MEESQQQSTKFDAPPSPYVPSRVYLAQIYWKKP) are cytoplasmic. The chain crosses the membrane as a helical span at residues 34–54 (AIVVLRVLQFVFSLIAFSVMA). Residues 55–72 (DLLHDVQGSIKSLSYTVA) lie on the Extracellular side of the membrane. The helical transmembrane segment at 73-93 (IGVLACAYALAQLSFSLWCVI) threads the bilayer. Residues 94–118 (RGATSSSGVTPLYQYATFICDQMST) lie on the Cytoplasmic side of the membrane. A helical membrane pass occupies residues 119–139 (YFLISAASATATLIDVSGVCG). The Extracellular portion of the chain corresponds to 140–156 (SNGSGTNLCSRSTASVT). Asn-141 carries an N-linked (GlcNAc...) asparagine glycan. A helical membrane pass occupies residues 157 to 177 (FAFLAFLAFSASSVLTGYYLV). The Cytoplasmic segment spans residues 178-183 (KCILKA).

The protein belongs to the Casparian strip membrane proteins (CASP) family. Homodimer and heterodimers.

Its subcellular location is the cell membrane. The polypeptide is CASP-like protein UU1 (Selaginella moellendorffii (Spikemoss)).